The following is a 536-amino-acid chain: Mannuronan C5-epimerase (536 aa).

Residues 1-36 (MNSHASNGRSRNWPHALLESALLTSALLMASSVALA) form the signal peptide. PbH1 repeat units follow at residues 298-320 (TRDF…DPHD), 322-345 (SHGL…IISR), 347-369 (VDNS…VLDR), 371-393 (SVGN…TLYE), and 394-416 (SGNN…RVRN). His-319 acts as the Proton acceptor in catalysis.

Belongs to the D-mannuronate C5-epimerase family.

Its subcellular location is the periplasm. The catalysed reaction is [(1-&gt;4)-beta-D-mannuronosyl](n) = [alginate](n). The protein operates within glycan biosynthesis; alginate biosynthesis. In terms of biological role, catalyzes the epimerization of beta-D-mannuronate to alpha-L-guluronate during the synthesis of the linear polysaccharide alginate. In addition, is part of a periplasmic protein complex that protects alginate from degradation by AlgL by channeling the newly formed alginate polymer through a scaffold that transfers the alginate polymer through the periplasmic space to the outer membrane secretin AlgE. The polypeptide is Mannuronan C5-epimerase (algG) (Pseudomonas syringae pv. tomato (strain ATCC BAA-871 / DC3000)).